Consider the following 177-residue polypeptide: Olfactory protein (177 aa).

The signal sequence occupies residues 1–17 (MIRIIAIVVLFFLQCQA). Cys-81 and Cys-174 are joined by a disulfide.

This sequence belongs to the calycin superfamily. Lipocalin family. Synthesized in Bowman glands, which secrete the mucus that bathes the cilia of the olfactory neuroepithelium.

The protein resides in the secreted. The chain is Olfactory protein from Lithobates pipiens (Northern leopard frog).